Reading from the N-terminus, the 349-residue chain is MNIKKTAVKSALAVAAAAAALTTNVSAKDFSGAELYTLEEVQYGKFEARMKMAAASGTVSSMFLYQNGSEIADGRPWVEVDIEVLGKNPGSFQSNIITGKAGAQKTSEKHHAVSPAADQAFHTYGLEWTPNYVRWTVDGQEVRKTEGGQVSNLTGTQGLRFNLWSSESAAWVGQFDESKLPLFQFINWVKVYKYTPGQGEGGSDFTLDWTDNFDTFDGSRWGKGDWTFDGNRVDLTDKNIYSRDGMLILALTRKGQESFNGQVPRDDEPAPQSSSSAPASSSSVPASSSSVPASSSSAFVPPSSSSATNAIHGMRTTPAVAKEHRNLVNAKGAKVNPNGHKRYRVNFEH.

Residues 1–27 form the signal peptide; the sequence is MNIKKTAVKSALAVAAAAAALTTNVSA. The 170-residue stretch at 28-197 folds into the GH16 domain; it reads KDFSGAELYT…WVKVYKYTPG (170 aa). Residue glutamate 79 is the Nucleophile of the active site. Catalysis depends on glutamate 83, which acts as the Proton donor. The segment at 258–311 is disordered; it reads SFNGQVPRDDEPAPQSSSSAPASSSSVPASSSSVPASSSSAFVPPSSSSATNAI. Residues 270-307 show a composition bias toward low complexity; it reads APQSSSSAPASSSSVPASSSSVPASSSSAFVPPSSSSA. A run of 5 repeats spans residues 271–277, 278–284, 285–291, 292–298, and 301–307. Residues 271-307 form a 5 X 7 AA tandem repeats of P-X-S-S-S-S-X region; the sequence is PQSSSSAPASSSSVPASSSSVPASSSSAFVPPSSSSA.

This sequence belongs to the glycosyl hydrolase 16 family.

The enzyme catalyses Hydrolysis of (1-&gt;4)-beta-D-glucosidic linkages in beta-D-glucans containing (1-&gt;3)- and (1-&gt;4)-bonds.. In Fibrobacter succinogenes (strain ATCC 19169 / S85), this protein is Beta-glucanase.